The sequence spans 283 residues: Thymidylate synthase (283 aa).

Position 22 (R22) interacts with dUMP. C160 functions as the Nucleophile in the catalytic mechanism. DUMP-binding positions include 180–183 (RSCD), N191, and 221–223 (HIY). Position 183 (D183) interacts with (6R)-5,10-methylene-5,6,7,8-tetrahydrofolate. S282 serves as a coordination point for (6R)-5,10-methylene-5,6,7,8-tetrahydrofolate.

Belongs to the thymidylate synthase family. Bacterial-type ThyA subfamily. As to quaternary structure, homodimer.

The protein resides in the cytoplasm. It carries out the reaction dUMP + (6R)-5,10-methylene-5,6,7,8-tetrahydrofolate = 7,8-dihydrofolate + dTMP. It functions in the pathway pyrimidine metabolism; dTTP biosynthesis. Catalyzes the reductive methylation of 2'-deoxyuridine-5'-monophosphate (dUMP) to 2'-deoxythymidine-5'-monophosphate (dTMP) while utilizing 5,10-methylenetetrahydrofolate (mTHF) as the methyl donor and reductant in the reaction, yielding dihydrofolate (DHF) as a by-product. This enzymatic reaction provides an intracellular de novo source of dTMP, an essential precursor for DNA biosynthesis. The chain is Thymidylate synthase from Shewanella sediminis (strain HAW-EB3).